Reading from the N-terminus, the 473-residue chain is MHSLTTHKHVRGGDMTIRTRFAPSPTGLLHVGGARTALFNYLFARHHGGEYLLRIEDTDRARSTPEAVQVILDGLDWLGLSPDQEPVFQSTRETRHTEVAHSLLERGMAYRCFLSPEELQAQRDQAAADKRPLRINSPWRDRDLSEAPSGIAPVIRLRVPQEGETVVDDLVQGPVRVANAELDDMIILRSDGTPTYLHAVVVDDHDMAITHVIRGDDHLTNTFRQVQIFKALGWDLPRFAHIPLIHGADGAKLSKRHGAVSVLEFEREGFLPEALCNYLLRLGWGHGDAEILSRDEQVALFDLDGVGRAASRMDYAKLTHLNGVYLREADDQRLTTDLCRRLDLSPDSDASSRIRRLMPKLKERARTLVDLAESARFVIERPSGPKDAKAAALLSDEARGWLRALLPQLQATDFSAAAVDQALRAFAEEHGLKLGQIAQPLRVALTGGTTSPPIDATLEALGASEVTSRIEAV.

The 'HIGH' region signature appears at 23-33 (PSPTGLLHVGG). Positions 252–256 (KLSKR) match the 'KMSKS' region motif. ATP is bound at residue Lys255.

It belongs to the class-I aminoacyl-tRNA synthetase family. Glutamate--tRNA ligase type 1 subfamily. As to quaternary structure, monomer.

Its subcellular location is the cytoplasm. The enzyme catalyses tRNA(Glu) + L-glutamate + ATP = L-glutamyl-tRNA(Glu) + AMP + diphosphate. Its function is as follows. Catalyzes the attachment of glutamate to tRNA(Glu) in a two-step reaction: glutamate is first activated by ATP to form Glu-AMP and then transferred to the acceptor end of tRNA(Glu). The chain is Glutamate--tRNA ligase 1 from Granulibacter bethesdensis (strain ATCC BAA-1260 / CGDNIH1).